The sequence spans 1073 residues: Duffy receptor alpha form (1073 aa).

Positions 1-21 are cleaved as a signal peptide; it reads MEGKKKRPLFFLLVLLLSHKA. Topologically, residues 22-1007 are extracellular; sequence NNVLFERMNG…YECFTKGSST (986 aa). N-linked (GlcNAc...) asparagine glycosylation is found at N134, N179, and N202. 2 disulfides stabilise this stretch: C214/C243 and C227/C234. 2 N-linked (GlcNAc...) asparagine glycosylation sites follow: N252 and N348. Disulfide bonds link C297-C374, C412-C429, C424-C504, and C433-C502. Residues 517 to 915 are disordered; sequence VKNVGSGVES…LNNRKLNRDQ (399 aa). The segment covering 528–543 has biased composition (polar residues); the sequence is AASSNPITEAVKSSSG. The segment covering 546-561 has biased composition (basic and acidic residues); that stretch reads KVQEDSAHKSVNKGEG. Polar residues predominate over residues 562 to 576; that stretch reads KSSTNEADPGSQSGA. Basic and acidic residues-rich tracts occupy residues 675 to 710 and 717 to 734; these read GEVHNGTDTEPKEDGEKADPQKDIEVKGKQDTDDRS and HTDERATLGETHMEKDTE. N679 carries an N-linked (GlcNAc...) asparagine glycan. A compositionally biased stretch (polar residues) spans 736–766; that stretch reads AGGSTLTPEQNVSVASDNGNVPGSGNKQNEG. N-linked (GlcNAc...) asparagine glycans are attached at residues N746, N779, and N788. Over residues 799 to 810 the composition is skewed to basic and acidic residues; it reads GNEKDFQKHDFM. Low complexity-rich tracts occupy residues 821 to 843 and 851 to 864; these read SDHTSSDQTSSDHTSSDQTSSDH and SDQTSSDQTSSDQT. Residues 867-891 are compositionally biased toward basic and acidic residues; that stretch reads TEGHHRDNVRNPEIKSSEDMSKGDF. Over residues 893–909 the composition is skewed to polar residues; sequence RNSNSNELYSHNNLNNR. A helical membrane pass occupies residues 1008–1029; that stretch reads GIVYFATGGAFLIILLLFASWN. Residues 1030 to 1073 are Cytoplasmic-facing; it reads AASNDYEEEATFDEFVEYSDDIHRTPLMPNDIEHMQQFTPLDYS.

Interacts (via region II) with human ACKR1 (via N-terminal extracellular domain). Interacts (via region II) with rhesus macaque ACKR1 (via N-terminal extracellular domain).

Its subcellular location is the cell membrane. It localises to the cytoplasmic vesicle. It is found in the secretory vesicle. The protein localises to the microneme. Binds to the human erythrocyte Duffy blood group determinant (ACKR1). Binds to the rhesus macaque erythrocyte Duffy blood group determinant (ACKR1). The chain is Duffy receptor alpha form from Plasmodium knowlesi.